Consider the following 537-residue polypeptide: tRNA(His) guanylyltransferase 2 (537 aa).

Mg(2+) is bound by residues D307, G308, and D354. Residues D307–H312 and S353–D354 contribute to the GTP site.

This sequence belongs to the tRNA(His) guanylyltransferase family. Requires Mg(2+) as cofactor.

It localises to the nucleus. It is found in the nucleoplasm. It catalyses the reaction a 5'-end ribonucleotide-tRNA(His) + GTP + ATP + H2O = a 5'-end phospho-guanosine-ribonucleotide-tRNA(His) + AMP + 2 diphosphate + H(+). Adds a GMP to the 5'-end of tRNA(His) after transcription and RNase P cleavage. In Arabidopsis thaliana (Mouse-ear cress), this protein is tRNA(His) guanylyltransferase 2 (THG2).